The following is a 239-amino-acid chain: Orotidine 5'-phosphate decarboxylase (239 aa).

Substrate-binding positions include Asp-10, Lys-32, 59-68 (DLKLHDIPNT), Thr-122, Arg-184, Gln-193, Gly-213, and Arg-214. Lys-61 acts as the Proton donor in catalysis.

Belongs to the OMP decarboxylase family. Type 1 subfamily. As to quaternary structure, homodimer.

The catalysed reaction is orotidine 5'-phosphate + H(+) = UMP + CO2. The protein operates within pyrimidine metabolism; UMP biosynthesis via de novo pathway; UMP from orotate: step 2/2. In terms of biological role, catalyzes the decarboxylation of orotidine 5'-monophosphate (OMP) to uridine 5'-monophosphate (UMP). The sequence is that of Orotidine 5'-phosphate decarboxylase from Geobacillus thermodenitrificans (strain NG80-2).